We begin with the raw amino-acid sequence, 399 residues long: S-adenosylmethionine synthase (399 aa).

Position 136 to 141 (136 to 141 (GTGSAD)) interacts with ATP.

This sequence belongs to the AdoMet synthase 2 family. Requires Mg(2+) as cofactor.

It carries out the reaction L-methionine + ATP + H2O = S-adenosyl-L-methionine + phosphate + diphosphate. Its pathway is amino-acid biosynthesis; S-adenosyl-L-methionine biosynthesis; S-adenosyl-L-methionine from L-methionine: step 1/1. Catalyzes the formation of S-adenosylmethionine from methionine and ATP. The protein is S-adenosylmethionine synthase of Methanothrix thermoacetophila (strain DSM 6194 / JCM 14653 / NBRC 101360 / PT) (Methanosaeta thermophila).